Reading from the N-terminus, the 396-residue chain is NADH-quinone oxidoreductase subunit D (396 aa).

Belongs to the complex I 49 kDa subunit family. NDH-1 is composed of 14 different subunits. Subunits NuoB, C, D, E, F, and G constitute the peripheral sector of the complex.

It localises to the cell inner membrane. It catalyses the reaction a quinone + NADH + 5 H(+)(in) = a quinol + NAD(+) + 4 H(+)(out). In terms of biological role, NDH-1 shuttles electrons from NADH, via FMN and iron-sulfur (Fe-S) centers, to quinones in the respiratory chain. The immediate electron acceptor for the enzyme in this species is believed to be ubiquinone. Couples the redox reaction to proton translocation (for every two electrons transferred, four hydrogen ions are translocated across the cytoplasmic membrane), and thus conserves the redox energy in a proton gradient. In Methylobacterium sp. (strain 4-46), this protein is NADH-quinone oxidoreductase subunit D.